Reading from the N-terminus, the 545-residue chain is MATNYIFVTGGVVSSLGKGIAAASLASILEARGLNVTIMKLDPYINVDPGTMSPTQHGEVFVTQDGAETDLDLGHYERFIRSKMSKANNFTSGKIYSEVLRKERRGDYLGATIQVIPHITNEIKERVIEGGKGRDVVIVEVGGTVGDIESLPFLEALRQLAVDVGREKTLFMHLTLVPYIPTAGEVKTKPTQHSVKELLSIGIQPDVLICRSDRAIPSNERKKIALFCNVPERAVISLKDVDSIYRIPELLKSQGLDTFVCDRFRLDCPEADLSEWEQVLYRQANPTGEVTIGMVGKYVELPDAYKSVNEALKHAGLTNRLTVNIKYIDSQDIETKGVELLHGLDAILVPGGFGYRGVEGKIRTAQYARENKIPYLGICLGMQIALIEYARNVAGLTQANSSEFDKDCPQPVVGLITEWQDESGNVETRSDESDLGGTMRLGAQQCHLIEGTKAREVYGAETIVERHRHRYEVNNTLLPQIEAAGLKVSGLSADRKLVEIIEIPNHPWFIAAQFHPEFTSTPRDGHPLFAGFVKAAKDYQDSHKA.

Positions 1–266 (MATNYIFVTG…DTFVCDRFRL (266 aa)) are amidoligase domain. Ser14 contributes to the CTP binding site. A UTP-binding site is contributed by Ser14. ATP contacts are provided by residues 15-20 (SLGKGI) and Asp72. Positions 72 and 140 each coordinate Mg(2+). CTP is bound by residues 147–149 (DIE), 187–192 (KTKPTQ), and Lys223. UTP-binding positions include 187-192 (KTKPTQ) and Lys223. 239-241 (KDV) contacts ATP. The Glutamine amidotransferase type-1 domain maps to 291–542 (TIGMVGKYVE…VKAAKDYQDS (252 aa)). An L-glutamine-binding site is contributed by Gly352. Catalysis depends on Cys379, which acts as the Nucleophile; for glutamine hydrolysis. L-glutamine-binding positions include 380–383 (LGMQ), Glu403, and Arg470. Catalysis depends on residues His515 and Glu517.

Belongs to the CTP synthase family. In terms of assembly, homotetramer.

It catalyses the reaction UTP + L-glutamine + ATP + H2O = CTP + L-glutamate + ADP + phosphate + 2 H(+). It carries out the reaction L-glutamine + H2O = L-glutamate + NH4(+). The enzyme catalyses UTP + NH4(+) + ATP = CTP + ADP + phosphate + 2 H(+). The protein operates within pyrimidine metabolism; CTP biosynthesis via de novo pathway; CTP from UDP: step 2/2. With respect to regulation, allosterically activated by GTP, when glutamine is the substrate; GTP has no effect on the reaction when ammonia is the substrate. The allosteric effector GTP functions by stabilizing the protein conformation that binds the tetrahedral intermediate(s) formed during glutamine hydrolysis. Inhibited by the product CTP, via allosteric rather than competitive inhibition. In terms of biological role, catalyzes the ATP-dependent amination of UTP to CTP with either L-glutamine or ammonia as the source of nitrogen. Regulates intracellular CTP levels through interactions with the four ribonucleotide triphosphates. This Actinobacillus pleuropneumoniae serotype 7 (strain AP76) protein is CTP synthase.